Here is an 86-residue protein sequence, read N- to C-terminus: MSFLSFLLGQKKTSAVVAKERLQIILAHERSGRGASPDYLPQLQQELVAVISKYVNINPDDIKVHLERQDTLEVLEVKIEMPQKEA.

The protein belongs to the MinE family.

Prevents the cell division inhibition by proteins MinC and MinD at internal division sites while permitting inhibition at polar sites. This ensures cell division at the proper site by restricting the formation of a division septum at the midpoint of the long axis of the cell. This Bordetella petrii (strain ATCC BAA-461 / DSM 12804 / CCUG 43448) protein is Cell division topological specificity factor.